We begin with the raw amino-acid sequence, 505 residues long: uncharacterized protein (505 aa).

An N-terminal signal peptide occupies residues 1 to 19 (MILFTAIILVASVVHVVVS). Over 20–483 (SPQQCYYCVE…EQPNSAPRGE (464 aa)) the chain is Extracellular. Residues 484–504 (IHQLFRCTFVAVFIVFACFIV) form a helical membrane-spanning segment. Position 505 (Cys505) is a topological domain, cytoplasmic.

Component of the acid-insoluble and acid-soluble organic matrix of the aragonitic skeleton (at protein level).

The protein localises to the membrane. This is an uncharacterized protein from Acropora millepora (Staghorn coral).